The chain runs to 364 residues: Uroporphyrinogen decarboxylase (364 aa).

Substrate contacts are provided by residues arginine 28 to arginine 32, aspartate 78, tyrosine 160, threonine 215, and histidine 333.

Belongs to the uroporphyrinogen decarboxylase family. As to quaternary structure, homodimer.

Its subcellular location is the cytoplasm. It catalyses the reaction uroporphyrinogen III + 4 H(+) = coproporphyrinogen III + 4 CO2. Its pathway is porphyrin-containing compound metabolism; protoporphyrin-IX biosynthesis; coproporphyrinogen-III from 5-aminolevulinate: step 4/4. Its function is as follows. Catalyzes the decarboxylation of four acetate groups of uroporphyrinogen-III to yield coproporphyrinogen-III. In Burkholderia mallei (strain NCTC 10247), this protein is Uroporphyrinogen decarboxylase.